The following is a 680-amino-acid chain: DNA ligase (680 aa).

Residues 35–39, 86–87, and E111 each bind NAD(+); these read DADFD and SL. K113 (N6-AMP-lysine intermediate) is an active-site residue. NAD(+)-binding residues include R134, E174, K290, and K314. C408, C411, C427, and C433 together coordinate Zn(2+). A BRCT domain is found at 597 to 680; the sequence is VAEQTLEGLT…RLLNTGSADE (84 aa).

Belongs to the NAD-dependent DNA ligase family. LigA subfamily. Requires Mg(2+) as cofactor. The cofactor is Mn(2+).

The enzyme catalyses NAD(+) + (deoxyribonucleotide)n-3'-hydroxyl + 5'-phospho-(deoxyribonucleotide)m = (deoxyribonucleotide)n+m + AMP + beta-nicotinamide D-nucleotide.. In terms of biological role, DNA ligase that catalyzes the formation of phosphodiester linkages between 5'-phosphoryl and 3'-hydroxyl groups in double-stranded DNA using NAD as a coenzyme and as the energy source for the reaction. It is essential for DNA replication and repair of damaged DNA. The protein is DNA ligase of Corynebacterium glutamicum (strain R).